The sequence spans 80 residues: Phycocyanin-645 alpha-1 chain (80 aa).

Residue arginine 16 coordinates (2R,3E)-phycocyanobilin. Residues cysteine 18, glutamine 24, tyrosine 25, and lysine 40 each contribute to the mesobiliverdin site. 2 residues coordinate 15,16-dihydrobiliverdin: proline 71 and isoleucine 73.

The protein belongs to the phycoerythrin family. Heterotetramer of 2 different alpha chains and 2 identical beta chains which form 2 alpha-beta heterodimers within the heterotetramer. Contains one phycocyanobilin chromophore, one mesobiliverdin chromophore and one 15,16-dihydrobiliverdin chromophore with binding mediated by both the alpha and beta subunits.

The protein localises to the plastid. Its subcellular location is the chloroplast thylakoid membrane. Functionally, light-harvesting photosynthetic tetrapyrrole chromophore-protein from the phycobiliprotein complex. The sequence is that of Phycocyanin-645 alpha-1 chain from Chroomonas sp.